The primary structure comprises 373 residues: Chaperone protein DnaJ (373 aa).

Residues 5-70 (DYYEVLGLQK…EKKSNYDQFG (66 aa)) enclose the J domain. The segment at 132–214 (GVEKEITVNR…CRGNGNVRKT (83 aa)) adopts a CR-type zinc-finger fold. Residues Cys-145, Cys-148, Cys-162, Cys-165, Cys-188, Cys-191, Cys-202, and Cys-205 each contribute to the Zn(2+) site. CXXCXGXG motif repeat units lie at residues 145 to 152 (CEHCNGSG), 162 to 169 (CPTCSGTG), 188 to 195 (CDRCSGTG), and 202 to 209 (CTHCRGNG).

Belongs to the DnaJ family. In terms of assembly, homodimer. Requires Zn(2+) as cofactor.

The protein resides in the cytoplasm. In terms of biological role, participates actively in the response to hyperosmotic and heat shock by preventing the aggregation of stress-denatured proteins and by disaggregating proteins, also in an autonomous, DnaK-independent fashion. Unfolded proteins bind initially to DnaJ; upon interaction with the DnaJ-bound protein, DnaK hydrolyzes its bound ATP, resulting in the formation of a stable complex. GrpE releases ADP from DnaK; ATP binding to DnaK triggers the release of the substrate protein, thus completing the reaction cycle. Several rounds of ATP-dependent interactions between DnaJ, DnaK and GrpE are required for fully efficient folding. Also involved, together with DnaK and GrpE, in the DNA replication of plasmids through activation of initiation proteins. This is Chaperone protein DnaJ from Clostridium botulinum (strain Eklund 17B / Type B).